A 319-amino-acid chain; its full sequence is tRNA uridine(34) hydroxylase (319 aa).

In terms of domain architecture, Rhodanese spans 123-221 (GDPDVVVIDT…YLETIPPEQS (99 aa)). Cys-181 acts as the Cysteine persulfide intermediate in catalysis. A disordered region spans residues 298–319 (ARQQVHIGASPEPKAMPATAGR).

This sequence belongs to the TrhO family.

The enzyme catalyses uridine(34) in tRNA + AH2 + O2 = 5-hydroxyuridine(34) in tRNA + A + H2O. In terms of biological role, catalyzes oxygen-dependent 5-hydroxyuridine (ho5U) modification at position 34 in tRNAs. The polypeptide is tRNA uridine(34) hydroxylase (Albidiferax ferrireducens (strain ATCC BAA-621 / DSM 15236 / T118) (Rhodoferax ferrireducens)).